A 275-amino-acid chain; its full sequence is Large ribosomal subunit protein uL2 (275 aa).

Disordered regions lie at residues 24–47 (IHKGSPHASLLESQSKTGGRNHHG) and 227–261 (PVDHPHGGGEAKSGQGNPHPVTPWGVPTKGYKTRK).

The protein belongs to the universal ribosomal protein uL2 family. Part of the 50S ribosomal subunit. Forms a bridge to the 30S subunit in the 70S ribosome.

Its function is as follows. One of the primary rRNA binding proteins. Required for association of the 30S and 50S subunits to form the 70S ribosome, for tRNA binding and peptide bond formation. It has been suggested to have peptidyltransferase activity; this is somewhat controversial. Makes several contacts with the 16S rRNA in the 70S ribosome. This chain is Large ribosomal subunit protein uL2, found in Xylella fastidiosa (strain M12).